A 651-amino-acid chain; its full sequence is Probable potassium transport system protein Kup (651 aa).

Helical transmembrane passes span L41 to F61, V82 to V102, L130 to P150, I163 to L183, V194 to L214, F235 to T255, W276 to L296, M309 to A329, I366 to F386, A395 to M415, A426 to I446, and E450 to V470.

The protein belongs to the HAK/KUP transporter (TC 2.A.72) family.

The protein localises to the cell inner membrane. The enzyme catalyses K(+)(in) + H(+)(in) = K(+)(out) + H(+)(out). Its function is as follows. Transport of potassium into the cell. Likely operates as a K(+):H(+) symporter. This Brucella canis (strain ATCC 23365 / NCTC 10854 / RM-666) protein is Probable potassium transport system protein Kup.